A 419-amino-acid polypeptide reads, in one-letter code: Tyrosine--tRNA ligase (419 aa).

Tyr-34 serves as a coordination point for L-tyrosine. Positions 39–48 (PSGDSMHIGH) match the 'HIGH' region motif. 2 residues coordinate L-tyrosine: Tyr-168 and Gln-172. The 'KMSKS' region signature appears at 230 to 234 (KFGKS). Residue Lys-233 participates in ATP binding. Residues 352 to 418 (ANLVDWLVTL…GKKKYFLVSY (67 aa)) enclose the S4 RNA-binding domain.

This sequence belongs to the class-I aminoacyl-tRNA synthetase family. TyrS type 1 subfamily. In terms of assembly, homodimer.

The protein resides in the cytoplasm. The enzyme catalyses tRNA(Tyr) + L-tyrosine + ATP = L-tyrosyl-tRNA(Tyr) + AMP + diphosphate + H(+). Functionally, catalyzes the attachment of tyrosine to tRNA(Tyr) in a two-step reaction: tyrosine is first activated by ATP to form Tyr-AMP and then transferred to the acceptor end of tRNA(Tyr). In Listeria monocytogenes serotype 4b (strain CLIP80459), this protein is Tyrosine--tRNA ligase.